The chain runs to 333 residues: SKIGINGFGRIGRLVLRAALSCGAQVVAVNDPFIALEYMVYMFKYDSTHGVFKGEVKMEDGALVVDGKKITVFNEMKPENIPWSKAGAEYIVESTGVFTTIEKASAHFKGGAKKVVISAPSADAPMFVCGVNLEKYSKDMTVVSNASCTTNCLAPVAKVLHENFEIVEGLMTTVHAVTATQKTVDGPSAKDWRGGRGAAQNIIPSSTGAAKAVGKVIPELDGKLTGMAFRVPTPDVSVVDLTVRLGKECSYDDIKAAMKTASEGPLQGFLGYTEDDVVSSDFIGDNRSSIFDAKAGIQLSKTFVKVVSWYDNEFGYSQRVIDLLKHMQKVDSA.

N-acetylserine is present on Ser-1. NAD(+) contacts are provided by residues Arg-10–Ile-11, Asp-31, and Ser-118. D-glyceraldehyde 3-phosphate-binding positions include Ser-147–Thr-149, Thr-178, Thr-207–Gly-208, and Arg-230. Residue Cys-148 is the Nucleophile of the active site. Residue Asn-312 participates in NAD(+) binding.

It belongs to the glyceraldehyde-3-phosphate dehydrogenase family. As to quaternary structure, homotetramer.

Its subcellular location is the cytoplasm. It catalyses the reaction D-glyceraldehyde 3-phosphate + phosphate + NAD(+) = (2R)-3-phospho-glyceroyl phosphate + NADH + H(+). It participates in carbohydrate degradation; glycolysis; pyruvate from D-glyceraldehyde 3-phosphate: step 1/5. This chain is Glyceraldehyde-3-phosphate dehydrogenase, found in Homarus americanus (American lobster).